We begin with the raw amino-acid sequence, 382 residues long: Osmoprotectant import ATP-binding protein OsmV (382 aa).

The 240-residue stretch at 2–241 folds into the ABC transporter domain; it reads IKLENLTKQF…PANEFVGSFV (240 aa). 39 to 46 contributes to the ATP binding site; sequence GPSGCGKT. 2 CBS domains span residues 258-320 and 322-373; these read VTDQ…THPF and ITGK…GRTR.

Belongs to the ABC transporter superfamily. The complex is composed of two ATP-binding proteins (OsmV), two transmembrane proteins (OsmW and OsmY) and a solute-binding protein (OsmX).

It localises to the cell inner membrane. Functionally, part of the OsmU ABC transporter complex, which is involved in the uptake of osmoprotectants such as choline-O-sulfate and glycine betaine. Probably responsible for energy coupling to the transport system. The chain is Osmoprotectant import ATP-binding protein OsmV (osmV) from Salmonella typhimurium (strain LT2 / SGSC1412 / ATCC 700720).